The primary structure comprises 319 residues: Zinc finger protein-like 1 homolog (319 aa).

The segment at 1–43 (MGLCKCPKRKVTNLFCYEHRVNVCEFCLVDNHPNCVVQSYLNW) adopts a B box-type; degenerate zinc-finger fold. An RING-type; atypical zinc finger spans residues 53-101 (CSLCHTTLTQGETIRLNCLHLLHWRCFDDWAASFPPTTAPAGYRCPCCS). The tract at residues 212–232 (ESSSDTRPLLRQDRDADNEEN) is disordered. Positions 219–232 (PLLRQDRDADNEEN) are enriched in basic and acidic residues. Residues 264-284 (KMAIFVMFLALLALITIITVL) form a helical membrane-spanning segment.

It belongs to the ZFPL1 family.

It localises to the membrane. This is Zinc finger protein-like 1 homolog from Caenorhabditis briggsae.